A 393-amino-acid chain; its full sequence is Phospholipid-transporting ATPase accessory subunit CRF1 (393 aa).

Over 1–46 the chain is Cytoplasmic; that stretch reads MGLILRWKEKKQLSSKQNAQKSRKPANTSFRQQRLKAWQPILSPQS. A helical transmembrane segment spans residues 47–67; it reads VLPLLILMACVFAPIGIGLVV. Residues 68–334 lie on the Lumenal side of the membrane; that stretch reads STISVQRLVV…NSIIGAGNEA (267 aa). Residues 70–332 are confers specificity for binding DNF3; sequence ISVQRLVVNY…TTNSIIGAGN (263 aa). Asn78, Asn123, Asn187, Asn202, Asn213, Asn240, and Asn291 each carry an N-linked (GlcNAc...) asparagine glycan. Intrachain disulfides connect Cys82–Cys126 and Cys179–Cys193. The chain crosses the membrane as a helical span at residues 335 to 355; it reads LGIVYLIVAGIATLFAILFLI. Over 356–393 the chain is Cytoplasmic; it reads KVIFKPRPMHDHSYLNFENSDTPFDESSVVSIPLREIL.

This sequence belongs to the CDC50/LEM3 family. As to quaternary structure, component of a flippase complex consisting of DNF3 and YNR048W/CRF1. Interacts with DNF3; the interaction is direct and required for proper expression and endoplasmic reticulum (ER) export of either partner.

It localises to the golgi apparatus. The protein resides in the trans-Golgi network membrane. In terms of biological role, accessory component of a P4-ATPase flippase complex which catalyzes the hydrolysis of ATP coupled to the transport of phosphatidylcholine and small amounts of phosphatidylethanolamine from the lumen to the cytosolic leaflet of the trans-Golgi network and ensures the maintenance of asymmetric distribution of phospholipids. May be involved in transport from early endosomes to the trans-Golgi network (TGN). The sequence is that of Phospholipid-transporting ATPase accessory subunit CRF1 from Saccharomyces cerevisiae (strain ATCC 204508 / S288c) (Baker's yeast).